The sequence spans 587 residues: A-type ATP synthase subunit A (587 aa).

234-241 (GPFGSGKT) is an ATP binding site.

It belongs to the ATPase alpha/beta chains family. As to quaternary structure, the N-terminus (approximately residues 106-122) interacts with subunit H. Has multiple subunits with at least A(3), B(3), C, D, E(1 or 2), F, H(2), I and proteolipid K(x).

It is found in the cell membrane. The enzyme catalyses ATP + H2O + 4 H(+)(in) = ADP + phosphate + 5 H(+)(out). Its activity is regulated as follows. ATP hydrolysis is inhibited by N',N'-dicyclohexylcarbodiimide. Its function is as follows. Component of the A-type ATP synthase that produces ATP from ADP in the presence of a proton gradient across the membrane. The A chain is the catalytic subunit. Hydrolyzes ATP, GTP (86% of ATPase rate) and UTP (54% of ATPase rate), has very poor activity on CTP. The sequence is that of A-type ATP synthase subunit A from Methanocaldococcus jannaschii (strain ATCC 43067 / DSM 2661 / JAL-1 / JCM 10045 / NBRC 100440) (Methanococcus jannaschii).